We begin with the raw amino-acid sequence, 417 residues long: Serine hydroxymethyltransferase (417 aa).

(6S)-5,6,7,8-tetrahydrofolate-binding positions include leucine 121 and 125 to 127 (GHL). Lysine 229 carries the N6-(pyridoxal phosphate)lysine modification. 355 to 357 (SPF) contacts (6S)-5,6,7,8-tetrahydrofolate.

It belongs to the SHMT family. As to quaternary structure, homodimer. It depends on pyridoxal 5'-phosphate as a cofactor.

Its subcellular location is the cytoplasm. It carries out the reaction (6R)-5,10-methylene-5,6,7,8-tetrahydrofolate + glycine + H2O = (6S)-5,6,7,8-tetrahydrofolate + L-serine. It participates in one-carbon metabolism; tetrahydrofolate interconversion. It functions in the pathway amino-acid biosynthesis; glycine biosynthesis; glycine from L-serine: step 1/1. In terms of biological role, catalyzes the reversible interconversion of serine and glycine with tetrahydrofolate (THF) serving as the one-carbon carrier. This reaction serves as the major source of one-carbon groups required for the biosynthesis of purines, thymidylate, methionine, and other important biomolecules. Also exhibits THF-independent aldolase activity toward beta-hydroxyamino acids, producing glycine and aldehydes, via a retro-aldol mechanism. The polypeptide is Serine hydroxymethyltransferase (Buchnera aphidicola subsp. Schizaphis graminum (strain Sg)).